The primary structure comprises 551 residues: Arginine--tRNA ligase (551 aa).

The short motif at 125–135 (ANPTGPLHIGH) is the 'HIGH' region element.

Belongs to the class-I aminoacyl-tRNA synthetase family. As to quaternary structure, monomer.

The protein resides in the cytoplasm. It carries out the reaction tRNA(Arg) + L-arginine + ATP = L-arginyl-tRNA(Arg) + AMP + diphosphate. The chain is Arginine--tRNA ligase from Nitratidesulfovibrio vulgaris (strain ATCC 29579 / DSM 644 / CCUG 34227 / NCIMB 8303 / VKM B-1760 / Hildenborough) (Desulfovibrio vulgaris).